We begin with the raw amino-acid sequence, 625 residues long: Sphingomyelin phosphodiesterase (625 aa).

A disordered region spans residues 1-20 (MPRHGVSPGQGLPRSGREQA). A signal peptide spans 1-40 (MPRHGVSPGQGLPRSGREQASDRSLGAPCLRLLWLGLALA). The Saposin B-type domain maps to 81–165 (WNLTCPTCKG…LLGSSCGHWD (85 aa)). N-linked (GlcNAc...) asparagine glycosylation is present at asparagine 82. 3 cysteine pairs are disulfide-bonded: cysteine 85-cysteine 161, cysteine 88-cysteine 153, and cysteine 116-cysteine 127. Asparagine 171 is a glycosylation site (N-linked (GlcNAc...) asparagine). 2 residues coordinate Zn(2+): aspartate 202 and histidine 204. Intrachain disulfides connect cysteine 217/cysteine 222 and cysteine 223/cysteine 246. Aspartate 274 and asparagine 314 together coordinate Zn(2+). Residues asparagine 331 and asparagine 391 are each glycosylated (N-linked (GlcNAc...) asparagine). Cysteine 381 and cysteine 427 are oxidised to a cystine. Zn(2+) is bound by residues histidine 421, histidine 453, and histidine 455. Asparagine 499 carries an N-linked (GlcNAc...) asparagine glycan. Serine 504 is subject to Phosphoserine. An N-linked (GlcNAc...) asparagine glycan is attached at asparagine 516. 2 cysteine pairs are disulfide-bonded: cysteine 580-cysteine 584 and cysteine 590-cysteine 603.

Belongs to the acid sphingomyelinase family. In terms of assembly, monomer. Interacts with SORT1; the interaction is required for SMPD1 targeting to lysosomes. Requires Zn(2+) as cofactor. In terms of processing, proteolytically processed. Mature lysosomal form arises from C-terminal proteolytic processing of pro-sphingomyelin phosphodiesterase. Post-translationally, both lysosomal and secreted forms are glycosylated but they show a differential pattern of glycosylation. Phosphorylated at Ser-504 by PRKCD upon stress stimuli. Phosphorylation is required for secretion. In terms of processing, this form is generated following cleavage by CASP7 in the extracellular milieu. It shows increased activity.

Its subcellular location is the lysosome. The protein localises to the lipid droplet. It is found in the secreted. The protein resides in the extracellular space. It catalyses the reaction a sphingomyelin + H2O = phosphocholine + an N-acylsphing-4-enine + H(+). The catalysed reaction is N-(octadecanoyl)-sphing-4-enine-1-phosphocholine + H2O = N-octadecanoylsphing-4-enine + phosphocholine + H(+). The enzyme catalyses a 1,2-diacyl-sn-glycero-3-phosphocholine + H2O = phosphocholine + a 1,2-diacyl-sn-glycerol + H(+). It carries out the reaction 1,2-dihexadecanoyl-sn-glycero-3-phosphocholine + H2O = 1,2-dihexadecanoyl-sn-glycerol + phosphocholine + H(+). Its activity is regulated as follows. Hydrolysis of liposomal sphingomyelin is stimulated by incorporation of diacylglycerol (DAG), ceramide and free fatty acids into the liposomal membranes. Phosphatidylcholine hydrolysis is inhibited by incorporation of cholesterol, ceramide, DAG, monoacylglycerol and fatty acids. Functionally, converts sphingomyelin to ceramide. Exists as two enzymatic forms that arise from alternative trafficking of a single protein precursor, one that is targeted to the endolysosomal compartment, whereas the other is released extracellularly. However, in response to various forms of stress, lysosomal exocytosis may represent a major source of the secretory form. Its function is as follows. In the lysosomes, converts sphingomyelin to ceramide. Plays an important role in the export of cholesterol from the intraendolysosomal membranes. Also has phospholipase C activities toward 1,2-diacylglycerolphosphocholine and 1,2-diacylglycerolphosphoglycerol. Modulates stress-induced apoptosis through the production of ceramide. In terms of biological role, when secreted, modulates cell signaling with its ability to reorganize the plasma membrane by converting sphingomyelin to ceramide. Secreted form is increased in response to stress and inflammatory mediators such as IL1B, IFNG or TNF as well as upon infection with bacteria and viruses. Produces the release of ceramide in the outer leaflet of the plasma membrane playing a central role in host defense. Ceramide reorganizes these rafts into larger signaling platforms that are required to internalize bacteria, induce apoptosis and regulate the cytokine response in infected cells. In wounded cells, the lysosomal form is released extracellularly in the presence of Ca(2+) and promotes endocytosis and plasma membrane repair. This form is generated following cleavage by CASP7 in the extracellular milieu in response to bacterial infection. It shows increased ability to convert sphingomyelin to ceramide and promotes plasma membrane repair. Plasma membrane repair by ceramide counteracts the action of gasdermin-D (GSDMD) perforin (PRF1) pores that are formed in response to bacterial infection. The sequence is that of Sphingomyelin phosphodiesterase (SMPD1) from Bos taurus (Bovine).